The primary structure comprises 574 residues: MSSGIILLIVAIVLLVIIAYLVGVIIRKRNDTLITSLEERKQALFGLPVNDEIEEVKSLHLIGQSQTSFREWNQKWVDLTLNTFTDIEKHIFEAEHLNDTFNFIRAKHEINSVESQLNLVEEDITAIREALGILKEQEEKNSARVTHALDLYEKLQASVAENEDNFGSTMAEIEKQMKNIEAEFSQFVALNSSGDPVEAAEVLDKAEEHTIALGQITEQIPAIVAKLEDDFPDQLDDLETGYRRLLEENYHFPEKNIEARFQEIRESIRANSSELVTLDLDRARDENTHIQERIDSLYELFEREIAAYKVVAKNSKILPRYLAHAKHNNEQLKHEIARLSRKYILSENEGLNIKAFDKDLKDIEDNVLEIAEAFDQQEKPFSELQLILDRSIKTLASVESGQMDVFAAVKDIEKIESQARQHLEIYVTQLHMIKRYMEKRNLPGIPQDFLSTFFTTSSQLEALMDELSRGRINIEAVSRLSEVATAAIANLEELTYQVVQHATLTEQLLQYSNRYRSFEAGVQNSFEHALKLFEVDNDYQASFDEISYALETVEPGVTERFVNSYEKTRERIRF.

The Extracellular segment spans residues 1–7; the sequence is MSSGIIL. The chain crosses the membrane as a helical span at residues 8–26; the sequence is LIVAIVLLVIIAYLVGVII. At 27-574 the chain is on the cytoplasmic side; that stretch reads RKRNDTLITS…YEKTRERIRF (548 aa). Coiled coils occupy residues 102 to 131, 161 to 190, 276 to 379, and 459 to 493; these read NFIR…REAL, ENED…FVAL, VTLD…QQEK, and QLEA…NLEE.

This sequence belongs to the EzrA family.

It localises to the cell membrane. Functionally, negative regulator of FtsZ ring formation; modulates the frequency and position of FtsZ ring formation. Inhibits FtsZ ring formation at polar sites. Interacts either with FtsZ or with one of its binding partners to promote depolymerization. This Streptococcus equi subsp. zooepidemicus (strain H70) protein is Septation ring formation regulator EzrA.